Reading from the N-terminus, the 146-residue chain is Small ribosomal subunit protein bS16 (146 aa).

Residues 84–102 (SHLEAQKAAVERLGRRKDY) show a composition bias toward basic and acidic residues. Residues 84–146 (SHLEAQKAAV…DAPAAEATTE (63 aa)) are disordered. The span at 110–119 (APKAAPVAEA) shows a compositional bias: low complexity. A compositionally biased stretch (acidic residues) spans 120–130 (PAEEAPAEEPA). The span at 131–146 (AEASTDDAPAAEATTE) shows a compositional bias: low complexity.

Belongs to the bacterial ribosomal protein bS16 family.

The protein is Small ribosomal subunit protein bS16 of Rhodopirellula baltica (strain DSM 10527 / NCIMB 13988 / SH1).